The following is a 395-amino-acid chain: Inactive serine protease 54 (395 aa).

The first 30 residues, 1–30, serve as a signal peptide directing secretion; that stretch reads MVSAAGLSGDGKMRGVLLVLLGLLYSSTSC. The 233-residue stretch at 37–269 folds into the Peptidase S1 domain; that stretch reads VFYGPDPKEG…YSKWITSKAE (233 aa). Asparagine 123 carries an N-linked (GlcNAc...) asparagine glycan. Disulfide bonds link cysteine 164/cysteine 227, cysteine 195/cysteine 205, and cysteine 217/cysteine 248. The segment at 324–348 is disordered; it reads RLGNSSRDSLDVREKDVKESGRSPE. A glycan (N-linked (GlcNAc...) asparagine) is linked at asparagine 327. Residues 331–345 are compositionally biased toward basic and acidic residues; sequence DSLDVREKDVKESGR.

It belongs to the peptidase S1 family. Plasma kallikrein subfamily.

Its subcellular location is the secreted. The polypeptide is Inactive serine protease 54 (PRSS54) (Homo sapiens (Human)).